Here is a 106-residue protein sequence, read N- to C-terminus: Integration host factor subunit alpha (106 aa).

This sequence belongs to the bacterial histone-like protein family. Heterodimer of an alpha and a beta chain.

This protein is one of the two subunits of integration host factor, a specific DNA-binding protein that functions in genetic recombination as well as in transcriptional and translational control. This Methylobacterium radiotolerans (strain ATCC 27329 / DSM 1819 / JCM 2831 / NBRC 15690 / NCIMB 10815 / 0-1) protein is Integration host factor subunit alpha.